A 164-amino-acid polypeptide reads, in one-letter code: Phosphopantetheine adenylyltransferase (164 aa).

Substrate is bound at residue Ser9. Residues 9–10 (SF) and His17 each bind ATP. Residues Lys41, Leu73, and Arg87 each contribute to the substrate site. Residues 88-90 (GLR), Glu98, and 123-129 (YTFLSSS) contribute to the ATP site.

This sequence belongs to the bacterial CoaD family. In terms of assembly, homohexamer. Requires Mg(2+) as cofactor.

It is found in the cytoplasm. The catalysed reaction is (R)-4'-phosphopantetheine + ATP + H(+) = 3'-dephospho-CoA + diphosphate. The protein operates within cofactor biosynthesis; coenzyme A biosynthesis; CoA from (R)-pantothenate: step 4/5. Its function is as follows. Reversibly transfers an adenylyl group from ATP to 4'-phosphopantetheine, yielding dephospho-CoA (dPCoA) and pyrophosphate. This is Phosphopantetheine adenylyltransferase from Dictyoglomus thermophilum (strain ATCC 35947 / DSM 3960 / H-6-12).